Consider the following 57-residue polypeptide: Somatostatin-2 (57 aa).

A disordered region spans residues 1 to 26 (GRSHMVLNSALEGARGGPGGEEIPER).

Belongs to the somatostatin family.

Its subcellular location is the secreted. Somatostatin inhibits the release of somatotropin. This chain is Somatostatin-2 (sst2), found in Piaractus mesopotamicus (Small-scaled pacu).